The chain runs to 423 residues: Core protease OPG083 (423 aa).

Catalysis depends on residues His-241, Asp-248, and Cys-328.

The protein belongs to the peptidase C57 family.

It localises to the virion. Late protein responsible for processing most or all of the viral core and membrane proteins known to undergo morphogenesis-associated proteolysis. These proteolytic events are involved in the transformation of immature virions (IV) into mature virions (MV). Probably cleaves at least the OPG129/A3, OPG136/A10, OPG098/L4, and OPG144/A17 precursors preferentially at Ala-Gly-|-Ala motifs. Also seems to process Ala-Gly-|-Ser and Ala-Gly-|-Thr motifs. This Bos taurus (Bovine) protein is Core protease OPG083 (OPG083).